The following is a 114-amino-acid chain: U17-barytoxin-Tl1a (114 aa).

Residues 1–20 form the signal peptide; that stretch reads MKTIIVFLSLLVLATKFGDA. A propeptide spanning residues 21-74 is cleaved from the precursor; the sequence is NEGVNQEQMKEVIQNEFREDFLNEMAPMSLLQQLEAIESTLLEKEADRNSRQKR. 3 disulfide bridges follow: Cys-75–Cys-88, Cys-82–Cys-93, and Cys-87–Cys-108.

Belongs to the neurotoxin 14 (magi-1) family. 03 (ICK-30-40) subfamily. In terms of tissue distribution, expressed by the venom gland.

The protein localises to the secreted. Its function is as follows. Ion channel inhibitor. This Trittame loki (Brush-footed trapdoor spider) protein is U17-barytoxin-Tl1a.